The primary structure comprises 182 residues: Auxin-responsive protein IAA9 (182 aa).

The segment at 1-41 is disordered; that stretch reads MELELGLAPPNSGHLVVDELSSSSSSGGGSGSAPVSASSAG. An EAR-like (transcriptional repression) motif is present at residues 3-7; the sequence is LELGL. The segment covering 32-41 has biased composition (low complexity); it reads SAPVSASSAG. A PB1 domain is found at 92–182; it reads ANYVKVKKEG…RSVKRLKILG (91 aa).

It belongs to the Aux/IAA family. Homodimers and heterodimers. Expressed in etiolated shoots and flowers.

It is found in the nucleus. Its function is as follows. Aux/IAA proteins are short-lived transcriptional factors that function as repressors of early auxin response genes at low auxin concentrations. The sequence is that of Auxin-responsive protein IAA9 (IAA9) from Oryza sativa subsp. japonica (Rice).